Consider the following 334-residue polypeptide: GTP 3',8-cyclase (334 aa).

The Radical SAM core domain occupies 13–239; it reads RFHRKFYYLR…KVKAVNDGPA (227 aa). R22 provides a ligand contact to GTP. Residues C29 and C33 each coordinate [4Fe-4S] cluster. Position 35 (Y35) interacts with S-adenosyl-L-methionine. C36 serves as a coordination point for [4Fe-4S] cluster. GTP is bound at residue R73. G77 contacts S-adenosyl-L-methionine. T104 serves as a coordination point for GTP. S128 contacts S-adenosyl-L-methionine. K165 is a binding site for GTP. An S-adenosyl-L-methionine-binding site is contributed by M199. C262 and C265 together coordinate [4Fe-4S] cluster. 267 to 269 contributes to the GTP binding site; that stretch reads RLR. C279 contributes to the [4Fe-4S] cluster binding site.

The protein belongs to the radical SAM superfamily. MoaA family. As to quaternary structure, monomer and homodimer. Requires [4Fe-4S] cluster as cofactor.

It carries out the reaction GTP + AH2 + S-adenosyl-L-methionine = (8S)-3',8-cyclo-7,8-dihydroguanosine 5'-triphosphate + 5'-deoxyadenosine + L-methionine + A + H(+). Its pathway is cofactor biosynthesis; molybdopterin biosynthesis. Catalyzes the cyclization of GTP to (8S)-3',8-cyclo-7,8-dihydroguanosine 5'-triphosphate. This chain is GTP 3',8-cyclase, found in Vibrio atlanticus (strain LGP32) (Vibrio splendidus (strain Mel32)).